The following is a 185-amino-acid chain: Large ribosomal subunit protein uL22 (185 aa).

This sequence belongs to the universal ribosomal protein uL22 family. In terms of assembly, component of the large ribosomal subunit. Mature ribosomes consist of a small (40S) and a large (60S) subunit. The 40S subunit contains about 32 different proteins and 1 molecule of RNA (18S). The 60S subunit contains 45 different proteins and 3 molecules of RNA (25S, 5.8S and 5S).

It localises to the cytoplasm. Its function is as follows. Component of the ribosome, a large ribonucleoprotein complex responsible for the synthesis of proteins in the cell. The small ribosomal subunit (SSU) binds messenger RNAs (mRNAs) and translates the encoded message by selecting cognate aminoacyl-transfer RNA (tRNA) molecules. The large subunit (LSU) contains the ribosomal catalytic site termed the peptidyl transferase center (PTC), which catalyzes the formation of peptide bonds, thereby polymerizing the amino acids delivered by tRNAs into a polypeptide chain. The nascent polypeptides leave the ribosome through a tunnel in the LSU and interact with protein factors that function in enzymatic processing, targeting, and the membrane insertion of nascent chains at the exit of the ribosomal tunnel. In Candida albicans (strain SC5314 / ATCC MYA-2876) (Yeast), this protein is Large ribosomal subunit protein uL22.